Consider the following 346-residue polypeptide: N-acetyl-gamma-glutamyl-phosphate reductase (346 aa).

Cys150 is an active-site residue.

It belongs to the NAGSA dehydrogenase family. Type 1 subfamily.

It is found in the cytoplasm. The enzyme catalyses N-acetyl-L-glutamate 5-semialdehyde + phosphate + NADP(+) = N-acetyl-L-glutamyl 5-phosphate + NADPH + H(+). It functions in the pathway amino-acid biosynthesis; L-arginine biosynthesis; N(2)-acetyl-L-ornithine from L-glutamate: step 3/4. In terms of biological role, catalyzes the NADPH-dependent reduction of N-acetyl-5-glutamyl phosphate to yield N-acetyl-L-glutamate 5-semialdehyde. In Alkaliphilus metalliredigens (strain QYMF), this protein is N-acetyl-gamma-glutamyl-phosphate reductase.